The chain runs to 660 residues: ATPase WRNIP1 (660 aa).

Residues 17-44 (QVQCPVCQQMMPAAHINSHLDRCLLLHP) form a UBZ4-type zinc finger. The Zn(2+) site is built by Cys20, Cys23, His31, His35, and Cys39. The segment at 50-191 (PAAGPHRAGE…DDPGHWDADA (142 aa)) is disordered. Phosphoserine occurs at positions 65 and 75. A compositionally biased stretch (polar residues) spans 76–89 (ESSALKQPATPTAA). Lys81 participates in a covalent cross-link: Glycyl lysine isopeptide (Lys-Gly) (interchain with G-Cter in ubiquitin). Thr85 bears the Phosphothreonine mark. Residues Ser91 and Ser92 each carry the phosphoserine modification. The span at 92–104 (SEGEGEEGDDGGE) shows a compositional bias: acidic residues. At Thr116 the chain carries Phosphothreonine. Residues 135–155 (ARKGLGKRPAAAAAAGSASPR) show a composition bias toward low complexity. Lys141 participates in a covalent cross-link: Glycyl lysine isopeptide (Lys-Gly) (interchain with G-Cter in ubiquitin). Residue Ser153 is modified to Phosphoserine. A compositionally biased stretch (acidic residues) spans 159–182 (ETEAQEEEEAGVDGDGDADVDGED). Lys220 participates in a covalent cross-link: Glycyl lysine isopeptide (Lys-Gly) (interchain with G-Cter in ubiquitin). 265–271 (PGCGKTT) contributes to the ATP binding site. Glycyl lysine isopeptide (Lys-Gly) (interchain with G-Cter in ubiquitin) cross-links involve residues Lys296, Lys305, Lys311, Lys317, and Lys330. Lys477 participates in a covalent cross-link: Glycyl lysine isopeptide (Lys-Gly) (interchain with G-Cter in SUMO2); alternate. Lys477 participates in a covalent cross-link: Glycyl lysine isopeptide (Lys-Gly) (interchain with G-Cter in ubiquitin); alternate. 2 positions are modified to phosphotyrosine: Tyr529 and Tyr557. Residue Lys622 forms a Glycyl lysine isopeptide (Lys-Gly) (interchain with G-Cter in ubiquitin) linkage. A Glycyl lysine isopeptide (Lys-Gly) (interchain with G-Cter in ubiquitin); alternate cross-link involves residue Lys628. The residue at position 628 (Lys628) is an N6-acetyllysine; alternate. Lys631 participates in a covalent cross-link: Glycyl lysine isopeptide (Lys-Gly) (interchain with G-Cter in ubiquitin).

It belongs to the AAA ATPase family. RarA/MGS1/WRNIP1 subfamily. In terms of assembly, forms homooligomers, possibly octamers. Directly interacts with POLD1, POLD2 and POLD4. Interacts with the N-terminal domain of WRN. Interacts (via UBZ4-type zinc finger) with monoubiquitin and polyubiquitin. Interacts with TRIM14 and PPP6C; these interactions positively regulate the RIGI signaling pathway. In terms of processing, sumoylated with SUMO1 and SUMO2/3. Ubiquitously expressed.

It is found in the nucleus. The protein localises to the cytoplasm. It carries out the reaction ATP + H2O = ADP + phosphate + H(+). Its function is as follows. Functions as a modulator of initiation or reinitiation events during DNA polymerase delta-mediated DNA synthesis. In the presence of ATP, stimulation of DNA polymerase delta-mediated DNA synthesis is decreased. Also plays a role in the innate immune defense against viruses. Stabilizes the RIGI dsRNA interaction and promotes RIGI 'Lys-63'-linked polyubiquitination. In turn, RIGI transmits the signal through mitochondrial MAVS. This is ATPase WRNIP1 from Rattus norvegicus (Rat).